We begin with the raw amino-acid sequence, 165 residues long: Transcriptional repressor NrdR (165 aa).

A zinc finger lies at 3-34 (CPFCSANDTKVIDSRLVSDGHQVRRRRECLAC). In terms of domain architecture, ATP-cone spans 49–139 (PRIIKRDGSR…VYLSFEDISE (91 aa)).

Belongs to the NrdR family. Requires Zn(2+) as cofactor.

Its function is as follows. Negatively regulates transcription of bacterial ribonucleotide reductase nrd genes and operons by binding to NrdR-boxes. In Colwellia psychrerythraea (strain 34H / ATCC BAA-681) (Vibrio psychroerythus), this protein is Transcriptional repressor NrdR.